The following is a 754-amino-acid chain: Disintegrin and metalloproteinase domain-containing protein 32 (754 aa).

The N-terminal stretch at 1–22 (MLGAMLHTLLLLLLAELGALLA) is a signal peptide. The residue at position 23 (Ser-23) is a Phosphoserine. Positions 23 to 176 (SGPESQSSFL…TNYGILINKK (154 aa)) are excised as a propeptide. Asn-126 carries an N-linked (GlcNAc...) asparagine glycan. Residues 177–689 (PKSPFKNLFP…ERASKNQEKK (513 aa)) lie on the Extracellular side of the membrane. One can recognise a Peptidase M12B domain in the interval 187–384 (LYLEMSIVVD…EGAKCLQNKP (198 aa)). 4 disulfide bridges follow: Cys-296–Cys-379, Cys-338–Cys-363, Cys-340–Cys-345, and Cys-454–Cys-475. Asn-362, Asn-469, Asn-570, and Asn-571 each carry an N-linked (GlcNAc...) asparagine glycan. In terms of domain architecture, Disintegrin spans 391-483 (AAVCGNGKVE…NCPPDVTINN (93 aa)). One can recognise an EGF-like domain in the interval 628–660 (QSKTCSSKCHGNGVCNSHGVCHCNAGYSPPNCQ). 3 disulfides stabilise this stretch: Cys-632–Cys-642, Cys-636–Cys-648, and Cys-650–Cys-659. Residues 690 to 710 (WLLSLYIVLIILASVFLIGTG) form a helical membrane-spanning segment. Residues 711–754 (WKGLKQCGSKEEESMSSESKSEDSTYTYVSRSTSETSSMTSTSS) are Cytoplasmic-facing. Residues 720-733 (KEEESMSSESKSED) show a composition bias toward basic and acidic residues. A disordered region spans residues 720 to 754 (KEEESMSSESKSEDSTYTYVSRSTSETSSMTSTSS). Low complexity predominate over residues 734-754 (STYTYVSRSTSETSSMTSTSS).

In terms of tissue distribution, expressed in sperm (at protein level). Highly expressed in the testis and weakly expressed in the epididymis, brain and heart.

It localises to the membrane. In terms of biological role, may play a role in sperm development and fertilization This is a non-catalytic metalloprotease-like protein. The polypeptide is Disintegrin and metalloproteinase domain-containing protein 32 (Mus musculus (Mouse)).